The primary structure comprises 287 residues: Pantothenate synthetase (287 aa).

Methionine 30–histidine 37 provides a ligand contact to ATP. Histidine 37 acts as the Proton donor in catalysis. Glutamine 61 provides a ligand contact to (R)-pantoate. Glutamine 61 is a binding site for beta-alanine. Residue glycine 147–aspartate 150 coordinates ATP. Glutamine 153 is a (R)-pantoate binding site. Residue methionine 184 to arginine 187 coordinates ATP.

It belongs to the pantothenate synthetase family. Homodimer.

Its subcellular location is the cytoplasm. The enzyme catalyses (R)-pantoate + beta-alanine + ATP = (R)-pantothenate + AMP + diphosphate + H(+). The protein operates within cofactor biosynthesis; (R)-pantothenate biosynthesis; (R)-pantothenate from (R)-pantoate and beta-alanine: step 1/1. Its function is as follows. Catalyzes the condensation of pantoate with beta-alanine in an ATP-dependent reaction via a pantoyl-adenylate intermediate. This chain is Pantothenate synthetase, found in Granulibacter bethesdensis (strain ATCC BAA-1260 / CGDNIH1).